Here is an 885-residue protein sequence, read N- to C-terminus: Envelope glycoprotein B (885 aa).

A signal peptide spans 1–34 (MRPRGTPPSFLPLPVLLALAVIAAAGRAAPAAAA). A compositionally biased stretch (low complexity) spans 29 to 46 (APAAAAAPTADPAATPAL). Residues 29 to 74 (APAAAAAPTADPAATPALPEDEEVPDEDGEGVATPAPAANASVEAG) are disordered. At 35 to 759 (APTADPAATP…SGVSSFLSNP (725 aa)) the chain is on the virion surface side. Residues 47 to 58 (PEDEEVPDEDGE) are compositionally biased toward acidic residues. Residues Asn-68 and Asn-122 are each glycosylated (N-linked (GlcNAc...) asparagine; by host). Disulfide bonds link Cys-97/Cys-558, Cys-114/Cys-514, Cys-188/Cys-252, Cys-345/Cys-393, and Cys-581/Cys-618. Involved in fusion and/or binding to host membrane regions lie at residues 154–160 (VWFGHRY) and 239–246 (RVEAFHRY). 2 N-linked (GlcNAc...) asparagine; by host glycosylation sites follow: Asn-379 and Asn-411. The tract at residues 455–478 (RRPAGGDPGEAATPGPSVDPPSVE) is disordered. Asn-659 is a glycosylation site (N-linked (GlcNAc...) asparagine; by host). Hydrophobic membrane proximal region regions lie at residues 704–757 (IDTV…SFLS) and 716–756 (LFAG…SSFL). A helical membrane pass occupies residues 760–780 (FGALAVGLLVLAGLAAAFFAF). Residues 781-885 (RYVMRLQRNP…PLRDTDEEEL (105 aa)) lie on the Intravirion side of the membrane. The Golgi targeting signature appears at 834–837 (YMAL). Positions 866–885 (MRKRARPRYSPLRDTDEEEL) are disordered. An Internalization motif motif is present at residues 874–877 (YSPL).

Belongs to the herpesviridae glycoprotein B family. In terms of assembly, homotrimer; disulfide-linked. Binds to heparan sulfate proteoglycans. Interacts with gH/gL heterodimer.

The protein resides in the virion membrane. Its subcellular location is the host cell membrane. It is found in the host endosome membrane. The protein localises to the host Golgi apparatus membrane. Envelope glycoprotein that forms spikes at the surface of virion envelope. Essential for the initial attachment to heparan sulfate moieties of the host cell surface proteoglycans. Involved in fusion of viral and cellular membranes leading to virus entry into the host cell. Following initial binding to its host receptors, membrane fusion is mediated by the fusion machinery composed at least of gB and the heterodimer gH/gL. May be involved in the fusion between the virion envelope and the outer nuclear membrane during virion egress. In Herpes simplex virus type 2 (strain SA8) (Simian agent 8), this protein is Envelope glycoprotein B.